The chain runs to 190 residues: Elongation factor P 1 (190 aa).

It belongs to the elongation factor P family.

Its subcellular location is the cytoplasm. It participates in protein biosynthesis; polypeptide chain elongation. Involved in peptide bond synthesis. Stimulates efficient translation and peptide-bond synthesis on native or reconstituted 70S ribosomes in vitro. Probably functions indirectly by altering the affinity of the ribosome for aminoacyl-tRNA, thus increasing their reactivity as acceptors for peptidyl transferase. This Lactobacillus johnsonii (strain CNCM I-12250 / La1 / NCC 533) protein is Elongation factor P 1 (efp1).